We begin with the raw amino-acid sequence, 356 residues long: Protein MGF 360-10L (356 aa).

An ANK repeat occupies Asp-57–Ile-89. The N-linked (GlcNAc...) asparagine; by host glycan is linked to Asn-172. A helical membrane pass occupies residues Asn-249–Ile-271. Residues Asn-352 and Asn-353 are each glycosylated (N-linked (GlcNAc...) asparagine; by host).

This sequence belongs to the asfivirus MGF 360 family.

The protein localises to the host membrane. Plays a role in virus cell tropism, and may be required for efficient virus replication in macrophages. This chain is Protein MGF 360-10L, found in African swine fever virus (isolate Tick/South Africa/Pretoriuskop Pr4/1996) (ASFV).